A 271-amino-acid polypeptide reads, in one-letter code: Shikimate dehydrogenase (NADP(+)) (271 aa).

Shikimate is bound by residues 14–16 (SRS) and threonine 61. Residue lysine 65 is the Proton acceptor of the active site. Positions 86 and 102 each coordinate shikimate. Residues 126-130 (GAGGA), 149-154 (NRTFSR), and methionine 213 contribute to the NADP(+) site. Tyrosine 215 contacts shikimate. Glycine 238 is a binding site for NADP(+).

Belongs to the shikimate dehydrogenase family. Homodimer.

It carries out the reaction shikimate + NADP(+) = 3-dehydroshikimate + NADPH + H(+). Its pathway is metabolic intermediate biosynthesis; chorismate biosynthesis; chorismate from D-erythrose 4-phosphate and phosphoenolpyruvate: step 4/7. Involved in the biosynthesis of the chorismate, which leads to the biosynthesis of aromatic amino acids. Catalyzes the reversible NADPH linked reduction of 3-dehydroshikimate (DHSA) to yield shikimate (SA). In Histophilus somni (strain 129Pt) (Haemophilus somnus), this protein is Shikimate dehydrogenase (NADP(+)).